A 1064-amino-acid chain; its full sequence is Bifunctional cytochrome P450/NADPH--P450 reductase ascE (1064 aa).

The segment at 1 to 484 (MTELIPGPKG…LHGGAKKGSK (484 aa)) is cytochrome P450. Cysteine 411 is a heme binding site. The tract at residues 485-1064 (IDGPSSGASL…ANRYVTEIFA (580 aa)) is NADPH-P-450 reductase. The Flavodoxin-like domain occupies 504–644 (MTILYGSDSG…DFERWQDDQL (141 aa)). FMN-binding positions include 510–514 (SDSGT) and 588–620 (VYGC…KRIA). The region spanning 676–905 (VDADEATVQS…KPALRLFHPP (230 aa)) is the FAD-binding FR-type domain.

In the N-terminal section; belongs to the cytochrome P450 family. FAD serves as cofactor. The cofactor is FMN. Heme is required as a cofactor.

The catalysed reaction is ilicicolin A + NADPH + O2 + H(+) = ilicicolin A epoxide + NADP(+) + H2O. Its pathway is secondary metabolite biosynthesis; terpenoid biosynthesis. Bifunctional cytochrome P450/NADPH--P450 reductase; part of the asc-1 gene cluster that mediates the biosynthesis both ascochlorin and ascofuranone, a strong inhibitor of cyanide-insensitive alternative oxidases and a promising drug candidate against African trypanosomiasis. The first step in the pathway is performed by the non-reducing polyketide synthase ascC that produces orsellinic acid by condensing acetyl-CoA with 3 malonyl-CoA units. Orsellinic acid is then prenylated by the prenyltransferase ascA to yield ilicicolinic acid B. Ilicicolinic acid B is further reduced to ilicicolin B by the reductase ascB. The halogenase ascD then chlorinates ilicicolin B to produce ilicicolin A which is converted to ilicicolin A epoxide by the cytochrome P450 monooxygenase ascE that catalyzes stereoselective epoxidation of the terminal double bond of the prenyl group. Ilicicolin A epoxide is the last common precursor for the biosynthesis of ascofuranone and ascochlorin. The terpene cyclase ascF produces a monocyclic terpene, and the cyclization reaction is proposed to be initiated by protonation of the terminal epoxide of ilicicolin A epoxide to generate a monocyclic tertiarycation, which is followed by a series of hydride and methyl shifts with abstraction of proton, leading to the formation of the (14S,15R,19R)-trimethylcyclohexanone ring structure of ilicicolin C, which is finally reduced to ascochlorin by the dehydrogenase ascG. On the other hand, ilicicolin A epoxide is hydroxylated by the cytochrome P450 monooxygenase ascH, and the resultant product is cyclized by the terpene cyclase ascI to ascofuranol via protonation-initiated epoxide ring opening, which facilitates the 6-endo-tet cyclization to form the tetrahy-drofuran ring. Finally, ascofuranol is oxidized into ascofuranone by ascJ. The protein is Bifunctional cytochrome P450/NADPH--P450 reductase ascE of Acremonium egyptiacum (Oospora egyptiaca).